The primary structure comprises 421 residues: MTAFFKTLRNHWKKTTAGLCLLTWGGHWLYGKHCDNLLRRAACQEAQVFGNQLIPPNAQVKKATVFLNPAACKGKARTLFEKNAAPILHLSGMDVTVVKTDYEGQAKKLLELMESTDVIIVAGGDGTLQEVVTGVLRRTDEATFSKIPIGFIPLGQTSSLSHTLFAESGNKVQHITDATLAIVKGETVPLDVLQIKGEKEQPVYAMTGLRWGSFRDAGVKVSKYWYLGPLKTKAAHFFSTLQEWPQTHQASISYTGPRERPPIEPEETPPRPSLYRRILRRLASFWAQPQDASSREVSPEVWKDVQLSTIELSITTRNTQLDLMSKEDFMNICIEPDTVSKGDFIIIGSKKVRDPGLRAAGTECLQASHCTLVLPEGTEGSFSIDSEEYEAMPVEVKLLPRKLRFFCDPRKREQMLPSTSQ.

Lys6 bears the N6-acetyllysine mark. Residues 15–31 are hydrophobic; sequence TTAGLCLLTWGGHWLYG. The DAGKc domain maps to 58-199; the sequence is AQVKKATVFL…LDVLQIKGEK (142 aa). A disordered region spans residues 252 to 271; that stretch reads ISYTGPRERPPIEPEETPPR.

It belongs to the AGK family. Component of the TIM22 complex, which core is composed of TIMM22, associated with TIMM10 (TIMM10A and/or TIMM10B), TIMM9, AGK and TIMM29. Interacts with SMIM26. The cofactor is Mg(2+). As to expression, ubiquitously expressed.

Its subcellular location is the mitochondrion inner membrane. It is found in the mitochondrion intermembrane space. It carries out the reaction a monoacylglycerol + ATP = a monoacyl-sn-glycero-3-phosphate + ADP + H(+). The enzyme catalyses a 1,2-diacyl-sn-glycerol + ATP = a 1,2-diacyl-sn-glycero-3-phosphate + ADP + H(+). It catalyses the reaction an N-acylsphing-4-enine + ATP = an N-acylsphing-4-enine 1-phosphate + ADP + H(+). The catalysed reaction is 1,2-di-(9Z-octadecenoyl)-sn-glycerol + ATP = 1,2-di-(9Z-octadecenoyl)-sn-glycero-3-phosphate + ADP + H(+). It carries out the reaction 1-(9Z-octadecenoyl)-sn-glycerol + ATP = 1-(9Z-octadecenoyl)-sn-glycero-3-phosphate + ADP + H(+). The enzyme catalyses 1-(5Z,8Z,11Z,14Z-eicosatetraenoyl)-sn-glycerol + ATP = 1-(5Z,8Z,11Z,14Z-eicosatetraenoyl)-sn-glycero-3-phosphate + ADP + H(+). It catalyses the reaction a 1-acyl-sn-glycerol + ATP = a 1-acyl-sn-glycero-3-phosphate + ADP + H(+). The catalysed reaction is 1-hexadecanoyl-sn-glycerol + ATP = 1-hexadecanoyl-sn-glycero-3-phosphate + ADP + H(+). It carries out the reaction a 2-acylglycerol + ATP = a 2-acyl-sn-glycerol 3-phosphate + ADP + H(+). The enzyme catalyses 2-(5Z,8Z,11Z,14Z-eicosatetraenoyl)-glycerol + ATP = 2-(5Z,8Z,11Z,14Z-eicosatetraenoyl)-sn-glycero-3-phosphate + ADP + H(+). It catalyses the reaction N-(hexanoyl)sphing-4-enine + ATP = N-hexanoylsphing-4-enine 1-phosphate + ADP + H(+). Its pathway is lipid metabolism; glycerolipid metabolism. With respect to regulation, both the ceramide and diacylglycerol kinase activities are inhibited by sphingosine and stimulated by cardiolipin. Both activities are stimulated by calcium when magnesium concentrations are low but inhibited by calcium when magnesium concentrations are high. Lipid kinase that can phosphorylate both monoacylglycerol and diacylglycerol to form lysophosphatidic acid (LPA) and phosphatidic acid (PA), respectively. Phosphorylates ceramide but not sphingosine. Phosphorylates 1,2-dioleoylglycerol more rapidly than 2,3-dioleoylglycerol. Independently of its lipid kinase activity, acts as a component of the TIM22 complex. The TIM22 complex mediates the import and insertion of multi-pass transmembrane proteins into the mitochondrial inner membrane by forming a twin-pore translocase that uses the membrane potential as the external driving force. In the TIM22 complex, required for the import of a subset of metabolite carriers into mitochondria, such as ANT1/SLC25A4 and SLC25A24, while it is not required for the import of TIMM23. Overexpression increases the formation and secretion of LPA, resulting in transactivation of EGFR and activation of the downstream MAPK signaling pathway, leading to increased cell growth. The sequence is that of Acylglycerol kinase, mitochondrial from Mus musculus (Mouse).